Consider the following 194-residue polypeptide: MKIYLASGNVNKKREVQELLPSHTIVLPKDEGIEFDPEETGSTFFENAMIKAKALYHIVKAPVLADDSGLCVDFLNGAPGIHSARYGSIEGEHVSAEAGINKVLSELKGVKDRSARFACCMVCLLDENRFYSVQETCEGHITEAPSGSGGFGYDPIFFVEKFGKTFAELTSEQKNSISHRGRALFSISRFIKGS.

7–12 (SGNVNK) contacts substrate. Mg(2+) contacts are provided by Glu-38 and Asp-67. Asp-67 (proton acceptor) is an active-site residue. Substrate contacts are provided by residues Ser-68, 151-154 (FGYD), Lys-174, and 179-180 (HR).

Belongs to the HAM1 NTPase family. As to quaternary structure, homodimer. The cofactor is Mg(2+).

The enzyme catalyses XTP + H2O = XMP + diphosphate + H(+). It carries out the reaction dITP + H2O = dIMP + diphosphate + H(+). The catalysed reaction is ITP + H2O = IMP + diphosphate + H(+). In terms of biological role, pyrophosphatase that catalyzes the hydrolysis of nucleoside triphosphates to their monophosphate derivatives, with a high preference for the non-canonical purine nucleotides XTP (xanthosine triphosphate), dITP (deoxyinosine triphosphate) and ITP. Seems to function as a house-cleaning enzyme that removes non-canonical purine nucleotides from the nucleotide pool, thus preventing their incorporation into DNA/RNA and avoiding chromosomal lesions. In Treponema denticola (strain ATCC 35405 / DSM 14222 / CIP 103919 / JCM 8153 / KCTC 15104), this protein is dITP/XTP pyrophosphatase.